A 109-amino-acid polypeptide reads, in one-letter code: Large ribosomal subunit protein uL24 (109 aa).

The protein belongs to the universal ribosomal protein uL24 family. Part of the 50S ribosomal subunit.

Functionally, one of two assembly initiator proteins, it binds directly to the 5'-end of the 23S rRNA, where it nucleates assembly of the 50S subunit. Its function is as follows. One of the proteins that surrounds the polypeptide exit tunnel on the outside of the subunit. The sequence is that of Large ribosomal subunit protein uL24 from Geotalea uraniireducens (strain Rf4) (Geobacter uraniireducens).